The sequence spans 396 residues: Phosphoglycerate kinase (396 aa).

Substrate contacts are provided by residues 21–23 (DFN), arginine 36, 59–62 (HLGK), arginine 119, and arginine 156. ATP-binding positions include lysine 206, glycine 294, glutamate 325, and 352–355 (GGDS).

The protein belongs to the phosphoglycerate kinase family. In terms of assembly, monomer.

The protein resides in the cytoplasm. The catalysed reaction is (2R)-3-phosphoglycerate + ATP = (2R)-3-phospho-glyceroyl phosphate + ADP. Its pathway is carbohydrate degradation; glycolysis; pyruvate from D-glyceraldehyde 3-phosphate: step 2/5. The sequence is that of Phosphoglycerate kinase from Staphylococcus aureus (strain USA300).